Here is a 130-residue protein sequence, read N- to C-terminus: Protein ApaG (130 aa).

Residues 3–127 form the ApaG domain; the sequence is RALTRDIEVT…FSLDSPGLVR (125 aa).

This Rhizobium meliloti (strain 1021) (Ensifer meliloti) protein is Protein ApaG.